We begin with the raw amino-acid sequence, 162 residues long: UPF0114 protein Psyr_4257 (162 aa).

A run of 4 helical transmembrane segments spans residues 15–35, 53–73, 109–129, and 136–156; these read LLAP…LKFF, LILV…LVMV, VAAS…MDAT, and LMWY…MGYL.

This sequence belongs to the UPF0114 family.

The protein resides in the cell membrane. This Pseudomonas syringae pv. syringae (strain B728a) protein is UPF0114 protein Psyr_4257.